Here is a 220-residue protein sequence, read N- to C-terminus: Adenylate kinase (220 aa).

ATP is bound at residue Gly-10–Thr-15. The segment at Ser-30–Val-59 is NMP. AMP contacts are provided by residues Thr-31, Arg-36, Lys-57 to Val-59, Gly-85 to Arg-88, and Gln-92. The segment at Gly-122–Asp-159 is LID. Residues Arg-123 and Thr-132 to Tyr-133 contribute to the ATP site. Arg-156 and Arg-167 together coordinate AMP. Position 206 (Gly-206) interacts with ATP.

The protein belongs to the adenylate kinase family. As to quaternary structure, monomer.

It localises to the cytoplasm. The enzyme catalyses AMP + ATP = 2 ADP. It functions in the pathway purine metabolism; AMP biosynthesis via salvage pathway; AMP from ADP: step 1/1. In terms of biological role, catalyzes the reversible transfer of the terminal phosphate group between ATP and AMP. Plays an important role in cellular energy homeostasis and in adenine nucleotide metabolism. The chain is Adenylate kinase from Burkholderia multivorans (strain ATCC 17616 / 249).